A 463-amino-acid polypeptide reads, in one-letter code: ATP-dependent protease ATPase subunit HslU (463 aa).

Residues I19, G61–E66, D277, E341, and R413 contribute to the ATP site.

The protein belongs to the ClpX chaperone family. HslU subfamily. A double ring-shaped homohexamer of HslV is capped on each side by a ring-shaped HslU homohexamer. The assembly of the HslU/HslV complex is dependent on binding of ATP.

It localises to the cytoplasm. Its function is as follows. ATPase subunit of a proteasome-like degradation complex; this subunit has chaperone activity. The binding of ATP and its subsequent hydrolysis by HslU are essential for unfolding of protein substrates subsequently hydrolyzed by HslV. HslU recognizes the N-terminal part of its protein substrates and unfolds these before they are guided to HslV for hydrolysis. In Bacillus cereus (strain ATCC 14579 / DSM 31 / CCUG 7414 / JCM 2152 / NBRC 15305 / NCIMB 9373 / NCTC 2599 / NRRL B-3711), this protein is ATP-dependent protease ATPase subunit HslU.